Reading from the N-terminus, the 281-residue chain is 3-methyl-2-oxobutanoate hydroxymethyltransferase (281 aa).

Residues 1–20 are disordered; sequence MSEQTIYGANTPGGSGPRTK. The Mg(2+) site is built by aspartate 62 and aspartate 101. 3-methyl-2-oxobutanoate-binding positions include 62–63, aspartate 101, and lysine 131; that span reads DS. Glutamate 133 serves as a coordination point for Mg(2+). Glutamate 199 functions as the Proton acceptor in the catalytic mechanism.

Belongs to the PanB family. As to quaternary structure, homodecamer; pentamer of dimers. Requires Mg(2+) as cofactor.

It is found in the cytoplasm. The enzyme catalyses 3-methyl-2-oxobutanoate + (6R)-5,10-methylene-5,6,7,8-tetrahydrofolate + H2O = 2-dehydropantoate + (6S)-5,6,7,8-tetrahydrofolate. It functions in the pathway cofactor biosynthesis; (R)-pantothenate biosynthesis; (R)-pantoate from 3-methyl-2-oxobutanoate: step 1/2. In terms of biological role, catalyzes the reversible reaction in which hydroxymethyl group from 5,10-methylenetetrahydrofolate is transferred onto alpha-ketoisovalerate to form ketopantoate. The sequence is that of 3-methyl-2-oxobutanoate hydroxymethyltransferase from Mycobacterium bovis (strain ATCC BAA-935 / AF2122/97).